Here is a 381-residue protein sequence, read N- to C-terminus: Sulfate adenylyltransferase (381 aa).

The protein belongs to the sulfate adenylyltransferase family.

The enzyme catalyses sulfate + ATP + H(+) = adenosine 5'-phosphosulfate + diphosphate. It functions in the pathway sulfur metabolism; hydrogen sulfide biosynthesis; sulfite from sulfate: step 1/3. In Chloroflexus aurantiacus (strain ATCC 29366 / DSM 635 / J-10-fl), this protein is Sulfate adenylyltransferase.